Here is a 334-residue protein sequence, read N- to C-terminus: 6-phosphogluconolactonase (334 aa).

Belongs to the cycloisomerase 2 family.

It catalyses the reaction 6-phospho-D-glucono-1,5-lactone + H2O = 6-phospho-D-gluconate + H(+). Its pathway is carbohydrate degradation; pentose phosphate pathway; D-ribulose 5-phosphate from D-glucose 6-phosphate (oxidative stage): step 2/3. Catalyzes the hydrolysis of 6-phosphogluconolactone to 6-phosphogluconate. In Buchnera aphidicola subsp. Acyrthosiphon pisum (strain 5A), this protein is 6-phosphogluconolactonase.